Consider the following 816-residue polypeptide: Leucine--tRNA ligase (816 aa).

Positions 40–51 (PYPSGSGLHVGH) match the 'HIGH' region motif. The 'KMSKS' region signature appears at 576–580 (KMSKS). ATP is bound at residue Lys579.

This sequence belongs to the class-I aminoacyl-tRNA synthetase family.

It is found in the cytoplasm. The catalysed reaction is tRNA(Leu) + L-leucine + ATP = L-leucyl-tRNA(Leu) + AMP + diphosphate. This Chlorobium phaeobacteroides (strain DSM 266 / SMG 266 / 2430) protein is Leucine--tRNA ligase.